Here is a 213-residue protein sequence, read N- to C-terminus: Uridine kinase (213 aa).

15-22 provides a ligand contact to ATP; sequence GGSGSGKT.

This sequence belongs to the uridine kinase family.

It localises to the cytoplasm. The catalysed reaction is uridine + ATP = UMP + ADP + H(+). It carries out the reaction cytidine + ATP = CMP + ADP + H(+). The protein operates within pyrimidine metabolism; CTP biosynthesis via salvage pathway; CTP from cytidine: step 1/3. It participates in pyrimidine metabolism; UMP biosynthesis via salvage pathway; UMP from uridine: step 1/1. This chain is Uridine kinase, found in Ligilactobacillus salivarius (strain UCC118) (Lactobacillus salivarius).